Here is a 331-residue protein sequence, read N- to C-terminus: MTHIPKTPADTETLLSEVQGWKHRHVLDLDNFSREELDMVMQTAGVMLDILSRPVKKVPALKGKTIATLFYEPSTRTRSSFELAAKSLSADVLNLNVSQSSISKGESLLDTLDTLESLGADMVVMRHPLSGAPYLAANNCHANIINAGDGWHAHPSQALLDIFTILRHKSSLEGLKITLIGDIKHSRVAHSNIWGLSKMGAKITLCAPYTLLPEGLNTNSKIFPEVTLETDIKQAVSGADVVMGLRLQRERQQSGLLPGIREYARYFQLNEEILKLAKPNSLVMHPGPVNEDIELSQSVVHGEQSVINEQVKNGVAVRMALFYLCSGSKEI.

Carbamoyl phosphate-binding residues include Arg-76 and Thr-77. Lys-104 is a binding site for L-aspartate. The carbamoyl phosphate site is built by Arg-126, His-154, and Gln-157. L-aspartate contacts are provided by Arg-187 and Arg-246. 2 residues coordinate carbamoyl phosphate: Gly-287 and Pro-288.

It belongs to the aspartate/ornithine carbamoyltransferase superfamily. ATCase family. Heterododecamer (2C3:3R2) of six catalytic PyrB chains organized as two trimers (C3), and six regulatory PyrI chains organized as three dimers (R2).

It carries out the reaction carbamoyl phosphate + L-aspartate = N-carbamoyl-L-aspartate + phosphate + H(+). The protein operates within pyrimidine metabolism; UMP biosynthesis via de novo pathway; (S)-dihydroorotate from bicarbonate: step 2/3. Its function is as follows. Catalyzes the condensation of carbamoyl phosphate and aspartate to form carbamoyl aspartate and inorganic phosphate, the committed step in the de novo pyrimidine nucleotide biosynthesis pathway. The protein is Aspartate carbamoyltransferase catalytic subunit of Dehalococcoides mccartyi (strain CBDB1).